The chain runs to 473 residues: Chromosomal replication initiator protein DnaA (473 aa).

The segment at 1–73 is domain I, interacts with DnaA modulators; sequence MTNIEQDRWS…LSCWQAEMPQ (73 aa). Residues 73 to 129 are domain II; it reads QVHRVDLTVRTAMRCAAPAKDAPAHAEPRRDDGRPAPELRATAIAPVSATHEALGGS. Residues 130–352 form a domain III, AAA+ region region; it reads PLDPRLTFGS…GAINRLLAHS (223 aa). 4 residues coordinate ATP: G177, G179, K180, and T181. Residues 353–473 form a domain IV, binds dsDNA region; the sequence is KLNAQPVTLE…VELLKRQLQE (121 aa).

The protein belongs to the DnaA family. As to quaternary structure, oligomerizes as a right-handed, spiral filament on DNA at oriC.

Its subcellular location is the cytoplasm. Plays an essential role in the initiation and regulation of chromosomal replication. ATP-DnaA binds to the origin of replication (oriC) to initiate formation of the DNA replication initiation complex once per cell cycle. Binds the DnaA box (a 9 base pair repeat at the origin) and separates the double-stranded (ds)DNA. Forms a right-handed helical filament on oriC DNA; dsDNA binds to the exterior of the filament while single-stranded (ss)DNA is stabiized in the filament's interior. The ATP-DnaA-oriC complex binds and stabilizes one strand of the AT-rich DNA unwinding element (DUE), permitting loading of DNA polymerase. After initiation quickly degrades to an ADP-DnaA complex that is not apt for DNA replication. Binds acidic phospholipids. The polypeptide is Chromosomal replication initiator protein DnaA (Rhodopseudomonas palustris (strain BisB18)).